A 1086-amino-acid chain; its full sequence is WD repeat-containing protein 64 (1086 aa).

WD repeat units follow at residues 129 to 168, 170 to 199, 321 to 360, 364 to 403, 411 to 448, 453 to 492, 498 to 537, 560 to 602, and 642 to 683; these read RRRD…WITG, DYLG…SSQE, AMPR…KPVG, GHMF…VLQV, PGDM…QDTK, THER…QIYQ, GLSI…EMKM, QVKQ…PYLQ, and IVDV…VKEI. The tract at residues 724–749 is disordered; sequence ICSSTQCDSSKGPQSSKGSKQSIHDA. Residues 732–744 show a composition bias toward low complexity; that stretch reads SSKGPQSSKGSKQ. WD repeat units lie at residues 765–806, 809–850, and 863–902; these read ASRK…KDML, TKHS…DPPH, and AHSL…YCGY. The segment at 1047–1069 is disordered; the sequence is DKVKREEAPEMTEGSRRKSLKRN. The segment covering 1049-1062 has biased composition (basic and acidic residues); that stretch reads VKREEAPEMTEGSR.

The polypeptide is WD repeat-containing protein 64 (Wdr64) (Mus musculus (Mouse)).